Here is a 367-residue protein sequence, read N- to C-terminus: Pre-small/secreted glycoprotein (367 aa).

A signal peptide spans 1-33 (MGSGYQLLQLPRERFRKTSFLVWVIILFQRAIS). A glycan (N-linked (GlcNAc...) asparagine; by host) is linked at asparagine 41. 2 disulfide bridges follow: cysteine 109–cysteine 136 and cysteine 122–cysteine 148. Residues asparagine 205, asparagine 239, asparagine 258, and asparagine 269 are each glycosylated (N-linked (GlcNAc...) asparagine; by host).

Belongs to the filoviruses glycoprotein family. Homodimer; disulfide-linked. The homodimers are linked by two disulfide bonds in a parallel orientation. As to quaternary structure, monomer. Post-translationally, this precursor is processed into mature sGP and delta-peptide by host furin or furin-like proteases. The cleavage site corresponds to the furin optimal cleavage sequence [KR]-X-[KR]-R. N-glycosylated. In terms of processing, O-glycosylated.

Its subcellular location is the secreted. In terms of biological role, seems to possess an anti-inflammatory activity as it can reverse the barrier-decreasing effects of TNF alpha. Might therefore contribute to the lack of inflammatory reaction seen during infection in spite the of extensive necrosis and massive virus production. Does not seem to be involved in activation of primary macrophages. Does not seem to interact specifically with neutrophils. Functionally, viroporin that permeabilizes mammalian cell plasma membranes. It acts by altering permeation of ionic compounds and small molecules. This activity may lead to viral enterotoxic activity. In Reston ebolavirus (strain Philippines-96) (REBOV), this protein is Pre-small/secreted glycoprotein (GP).